A 1767-amino-acid chain; its full sequence is Endo-alpha-N-acetylgalactosaminidase (1767 aa).

The first 39 residues, Met-1 to Asp-39, serve as a signal peptide directing secretion. 2 stretches are compositionally biased toward basic and acidic residues: residues Lys-61 to Glu-75 and Asp-84 to Ala-111. Disordered regions lie at residues Lys-61–Glu-124 and Val-301–Val-324. The segment covering Ala-112–Glu-124 has biased composition (low complexity). Basic and acidic residues predominate over residues Asp-304 to Val-324. Residues Asp-577, Asn-579, Asp-581, Asn-583, and Asp-588 each coordinate Ca(2+). The tract at residues Gly-602–Phe-893 is catalytic. Asp-658 lines the substrate pocket. Asp-764 acts as the Nucleophile in catalysis. The Proton donor/acceptor role is filled by Glu-796. Positions 1233, 1235, 1281, 1284, and 1411 each coordinate Ca(2+). Positions Leu-1711–Thr-1730 are disordered. Positions Lys-1717–Thr-1730 are enriched in basic and acidic residues. The LPXTG sorting signal motif lies at Leu-1735 to Gly-1739. Thr-1738 carries the pentaglycyl murein peptidoglycan amidated threonine modification. A propeptide spans Gly-1739–Asp-1767 (removed by sortase).

This sequence belongs to the glycosyl hydrolase 101 family. A subfamily.

The protein localises to the secreted. The protein resides in the cell wall. It catalyses the reaction a 3-O-[beta-D-galactosyl-(1-&gt;3)-N-acetyl-alpha-D-galactosaminyl]-L-threonyl-[protein] + H2O = beta-D-galactosyl-(1-&gt;3)-N-acetyl-D-galactosamine + L-threonyl-[protein]. It carries out the reaction a 3-O-[beta-D-galactosyl-(1-&gt;3)-N-acetyl-alpha-D-galactosaminyl]-L-seryl-[protein] + H2O = beta-D-galactosyl-(1-&gt;3)-N-acetyl-D-galactosamine + L-seryl-[protein]. Its function is as follows. Involved in the breakdown of mucin-type O-linked glycans. Specifically removes the T-antigen disaccharide (Gal-beta-1,3-GalNAc-alpha) from extracellular host glycoproteins. Representative of a broadly important class of virulence factors. This chain is Endo-alpha-N-acetylgalactosaminidase, found in Streptococcus pneumoniae serotype 4 (strain ATCC BAA-334 / TIGR4).